The chain runs to 201 residues: PLASMODESMATA CALLOSE-BINDING PROTEIN 1 (201 aa).

Positions 1–19 are cleaved as a signal peptide; the sequence is MAALVLSLLLLSLAGHSSA. A disulfide bridge connects residues C22 and C84. Residues 107-141 show a composition bias toward low complexity; sequence SASGSSGSTTVTPGTTNPKGSPTTTTLPGSGTNSP. The disordered stretch occupies residues 107–164; that stretch reads SASGSSGSTTVTPGTTNPKGSPTTTTLPGSGTNSPYSGNPTNGVFGGNSTGGTTGTGI. Residues 150–161 show a composition bias toward gly residues; it reads VFGGNSTGGTTG. N-linked (GlcNAc...) asparagine glycosylation is present at N154. S172 carries the GPI-anchor amidated serine lipid modification. Residues 173–201 constitute a propeptide, removed in mature form; the sequence is SAFALKNSSKLFICLLLIASSGFCSFLML. N179 is a glycosylation site (N-linked (GlcNAc...) asparagine).

In terms of processing, contains two additional disulfide bonds. Expressed in the shoot apical region and in young leaves but also detected in the laminar and vasculature of mature leaves.

It localises to the cell membrane. Its subcellular location is the cell junction. The protein localises to the plasmodesma. Its function is as follows. Able to bind (1-&gt;3)-beta-D-glucans (laminarin). Probably involved in cell-to-cell trafficking regulation. This Arabidopsis thaliana (Mouse-ear cress) protein is PLASMODESMATA CALLOSE-BINDING PROTEIN 1 (PDCB1).